The following is a 419-amino-acid chain: Tyrosine--tRNA ligase (419 aa).

An L-tyrosine-binding site is contributed by Tyr34. Positions 39 to 48 match the 'HIGH' region motif; the sequence is PTADSLHIGN. L-tyrosine-binding residues include Tyr169 and Gln173. Residues 230-234 carry the 'KMSKS' region motif; it reads KFGKT. Lys233 provides a ligand contact to ATP. The S4 RNA-binding domain occupies 352–419; sequence VPLVELLVSA…KKKYYLIRYA (68 aa).

The protein belongs to the class-I aminoacyl-tRNA synthetase family. TyrS type 1 subfamily. Homodimer.

It localises to the cytoplasm. The catalysed reaction is tRNA(Tyr) + L-tyrosine + ATP = L-tyrosyl-tRNA(Tyr) + AMP + diphosphate + H(+). In terms of biological role, catalyzes the attachment of tyrosine to tRNA(Tyr) in a two-step reaction: tyrosine is first activated by ATP to form Tyr-AMP and then transferred to the acceptor end of tRNA(Tyr). This Bacillus caldotenax protein is Tyrosine--tRNA ligase.